Here is a 483-residue protein sequence, read N- to C-terminus: MAASETAPFGVSAASKGGGGVAGARAQHGQLAVAGRVHDALVFAAGAVAAVLVLLATASFLSPMPVTNLVAFRSLPVSVASTSAASAAIDADVGVRGGPGAAGRTFYDDSRVSYAVEVGRRGGITGWDARRAAWMRLRYPRGLNATAAGRERVVMVSGSQAPPCRGEGGDHLLFRFLKNKVDYCRLHGVELLYNNALLQPRMLAYWAKIPAVRAAMLAHPDAEWVWWVDADAVFTDMDFSLPLHKYKDHNLVVYGWNKEVYGERSWVGLNAGVFLIRNCQWSLDFMDAWARMGPASPEYARWGSVLHDTLRGKSDKESDDQSALVYLLSEHEEKWGAKTYLEKGYFFQGYWVEVVDRLDDIAARYEAAERRPSAAAAHLRRRHAEREHERYAAARNAAVRGAVPGPAGGGQSGWRRPFVTHFTGCQPCGGEPNKIYSKKSCADGMNRALNFADDQVLRNYGYRHKDPLSDEVRPLPFDYPAAR.

Over Met-1–Ala-40 the chain is Cytoplasmic. Residues Leu-41–Leu-61 form a helical; Signal-anchor for type II membrane protein membrane-spanning segment. Residues Ser-62–Arg-483 lie on the Lumenal side of the membrane. Asn-144 carries an N-linked (GlcNAc...) asparagine glycan.

Belongs to the glycosyltransferase 34 family.

It is found in the golgi apparatus membrane. Its function is as follows. Probable glycosyltransferase that may be involved in the biosynthesis of xyloglucan. The sequence is that of Probable glycosyltransferase 6 from Oryza sativa subsp. japonica (Rice).